We begin with the raw amino-acid sequence, 466 residues long: 3-isopropylmalate dehydratase large subunit (466 aa).

3 residues coordinate [4Fe-4S] cluster: Cys-347, Cys-407, and Cys-410.

Belongs to the aconitase/IPM isomerase family. LeuC type 1 subfamily. As to quaternary structure, heterodimer of LeuC and LeuD. It depends on [4Fe-4S] cluster as a cofactor.

The enzyme catalyses (2R,3S)-3-isopropylmalate = (2S)-2-isopropylmalate. It participates in amino-acid biosynthesis; L-leucine biosynthesis; L-leucine from 3-methyl-2-oxobutanoate: step 2/4. Functionally, catalyzes the isomerization between 2-isopropylmalate and 3-isopropylmalate, via the formation of 2-isopropylmaleate. The polypeptide is 3-isopropylmalate dehydratase large subunit (Escherichia coli O17:K52:H18 (strain UMN026 / ExPEC)).